Reading from the N-terminus, the 150-residue chain is MAALDPTLLILLALAALGILSHNMTVTLAILILIAIRITPLNSFFPWVEKYGLTIGVLILTIGVMAPIASGKISASEVLHSFVQWKSILAIVVGVAVSWLGGRGVSLMTHQPSVVAGLLVGTVLGVALFKGVPVGPLIAAGLLSLVIGKS.

A run of 4 helical transmembrane segments spans residues 16 to 36 (ALGILSHNMTVTLAILILIAI), 51 to 71 (YGLTIGVLILTIGVMAPIASG), 88 to 108 (ILAIVVGVAVSWLGGRGVSLM), and 114 to 134 (VVAGLLVGTVLGVALFKGVPV).

It belongs to the UPF0756 family.

It localises to the cell membrane. This chain is UPF0756 membrane protein YPN_1328, found in Yersinia pestis bv. Antiqua (strain Nepal516).